The sequence spans 607 residues: Bifunctional lysine-specific demethylase and histidyl-hydroxylase NO66 (607 aa).

2 disordered regions span residues 23 to 121 (GPTI…IKTN) and 139 to 184 (ATQH…GEVE). A compositionally biased stretch (polar residues) spans 25–37 (TIQQTGATKTPKT). The segment covering 39 to 58 (SKIRRLSIRKSTRKIKHALK) has biased composition (basic residues). The span at 156 to 167 (DKTPVKRVRSDT) shows a compositional bias: basic and acidic residues. The JmjC domain maps to 188-405 (EEAEKMFEWL…DLMEKLVPAA (218 aa)). 3 residues coordinate Fe cation: His328, Asp330, and His371.

Belongs to the ROX family. NO66 subfamily. Fe(2+) is required as a cofactor.

Its subcellular location is the nucleus. The enzyme catalyses L-histidyl-[protein] + 2-oxoglutarate + O2 = (3S)-3-hydroxy-L-histidyl-[protein] + succinate + CO2. The catalysed reaction is N(6),N(6)-dimethyl-L-lysyl(36)-[histone H3] + 2 2-oxoglutarate + 2 O2 = L-lysyl(36)-[histone H3] + 2 formaldehyde + 2 succinate + 2 CO2. Its function is as follows. Oxygenase that can act as both a histone lysine demethylase and a ribosomal histidine hydroxylase. Specifically demethylates 'Lys-4' (H3K4me) and 'Lys-36' (H3K36me) of histone H3, thereby playing a central role in histone code. Also catalyzes the hydroxylation of 60S ribosomal protein L8. The sequence is that of Bifunctional lysine-specific demethylase and histidyl-hydroxylase NO66 from Branchiostoma floridae (Florida lancelet).